Here is a 102-residue protein sequence, read N- to C-terminus: Large ribosomal subunit protein bL21 (102 aa).

The protein belongs to the bacterial ribosomal protein bL21 family. Part of the 50S ribosomal subunit. Contacts protein L20.

Functionally, this protein binds to 23S rRNA in the presence of protein L20. The sequence is that of Large ribosomal subunit protein bL21 from Saccharopolyspora erythraea (strain ATCC 11635 / DSM 40517 / JCM 4748 / NBRC 13426 / NCIMB 8594 / NRRL 2338).